The chain runs to 366 residues: Galactoside alpha-(1,2)-fucosyltransferase 1 (366 aa).

Residues 1 to 8 are Cytoplasmic-facing; sequence MWPLSHRH. A helical; Signal-anchor for type II membrane protein transmembrane segment spans residues 9–25; it reads LCLAFLLVCVLSAISFF. The Lumenal portion of the chain corresponds to 26–366; sequence LHIHQDSFPH…LSPLWTLAEP (341 aa). N-linked (GlcNAc...) asparagine glycans are attached at residues Asn66, Asn302, and Asn328.

It belongs to the glycosyltransferase 11 family.

The protein resides in the golgi apparatus. The protein localises to the golgi stack membrane. The enzyme catalyses a beta-D-galactosyl-(1-&gt;4)-N-acetyl-beta-D-glucosaminyl derivative + GDP-beta-L-fucose = an alpha-L-Fuc-(1-&gt;2)-beta-D-Gal-(1-&gt;4)-beta-D-GlcNAc derivative + GDP + H(+). The catalysed reaction is a ganglioside GA1 + GDP-beta-L-fucose = a ganglioside Fuc-GA1 + GDP + H(+). It carries out the reaction a beta-D-Gal-(1-&gt;3)-beta-D-GlcNAc-(1-&gt;3)-beta-D-Gal-(1-&gt;4)-beta-D-Glc-(1&lt;-&gt;1')-Cer(d18:1(4E)) + GDP-beta-L-fucose = alpha-L-fucosyl-(1-&gt;2)- beta-D-galactosyl-(1-&gt;3)-N-acetyl-beta-D-glucosaminyl-(1-&gt;3)-beta-D-galactosyl-(1-&gt;4)-beta-D-glucosyl-(1&lt;-&gt;1')-N-acylsphing-4-enine + GDP + H(+). It catalyses the reaction a neolactoside nLc4Cer(d18:1(4E)) + GDP-beta-L-fucose = a neolactoside IV(2)-alpha-Fuc-nLc4Cer(d18:1(4E)) + GDP + H(+). The enzyme catalyses a ganglioside GM1 + GDP-beta-L-fucose = a ganglioside Fuc-GM1 + GDP + H(+). The catalysed reaction is beta-D-galactosyl-(1-&gt;3)-N-acetyl-D-galactosamine + GDP-beta-L-fucose = alpha-L-fucosyl-(1-&gt;2)-beta-D-galactosyl-(1-&gt;3)-N-acetyl-D-galactosamine + GDP + H(+). It functions in the pathway protein modification; protein glycosylation. In terms of biological role, catalyzes the transfer of L-fucose, from a guanosine diphosphate-beta-L-fucose, to the terminal galactose residue of glycoconjugates through an alpha(1,2) linkage leading to H antigen synthesis that is an intermediate substrate in the synthesis of ABO blood group antigens. H antigen is essential for maturation of the glomerular layer of the main olfactory bulb, in cell migration and early cell-cell contacts during tumor associated angiogenesis. Preferentially fucosylates soluble lactose and to a lesser extent fucosylates glycolipids gangliosides GA1 and GM1a. In Lagothrix lagotricha (Brown woolly monkey), this protein is Galactoside alpha-(1,2)-fucosyltransferase 1.